A 475-amino-acid chain; its full sequence is Maintenance of mitochondrial morphology protein 1 (475 aa).

The Lumenal portion of the chain corresponds to 1–14 (MSETFSPNLTFTEG). The helical transmembrane segment at 15–35 (FVLGQASFLIILLLFIRYVVF) threads the bilayer. Topologically, residues 36–475 (SPSEQIDHEG…VTPGQVGTSR (440 aa)) are cytoplasmic. Positions 80 to 278 (PAESSDWVNV…HPNHISLALP (199 aa)) constitute an SMP-LTD domain. Disordered regions lie at residues 321–381 (NPVE…GQPQ) and 394–475 (SYPH…GTSR). Pro residues predominate over residues 341 to 351 (PPTPLVQPPGT). Composition is skewed to polar residues over residues 353–380 (PTLSVSSRQSHRQSLPPSRPQSTTQGQP) and 394–403 (SYPHYNTYTL). Residues 442–464 (STTSSLTPSQSQSQFRFRGQFAS) show a composition bias toward low complexity.

This sequence belongs to the MMM1 family. Homodimer. Component of the ER-mitochondria encounter structure (ERMES) or MDM complex, composed of MMM1, MDM10, MDM12 and MDM34. An MMM1 homodimer associates with one molecule of MDM12 on each side in a pairwise head-to-tail manner, and the SMP-LTD domains of MMM1 and MDM12 generate a continuous hydrophobic tunnel for phospholipid trafficking.

It localises to the endoplasmic reticulum membrane. Functionally, component of the ERMES/MDM complex, which serves as a molecular tether to connect the endoplasmic reticulum (ER) and mitochondria. Components of this complex are involved in the control of mitochondrial shape and protein biogenesis, and function in nonvesicular lipid trafficking between the ER and mitochondria. The MDM12-MMM1 subcomplex functions in the major beta-barrel assembly pathway that is responsible for biogenesis of all outer membrane beta-barrel proteins, and acts in a late step after the SAM complex. The MDM10-MDM12-MMM1 subcomplex further acts in the TOM40-specific pathway after the action of the MDM12-MMM1 complex. Essential for establishing and maintaining the structure of mitochondria and maintenance of mtDNA nucleoids. The polypeptide is Maintenance of mitochondrial morphology protein 1 (Cryptococcus neoformans var. neoformans serotype D (strain B-3501A) (Filobasidiella neoformans)).